Here is a 209-residue protein sequence, read N- to C-terminus: FMN-dependent NADH:quinone oxidoreductase (209 aa).

Residues serine 9 and 15–17 (SNS) each bind FMN.

The protein belongs to the azoreductase type 1 family. In terms of assembly, homodimer. FMN serves as cofactor.

It carries out the reaction 2 a quinone + NADH + H(+) = 2 a 1,4-benzosemiquinone + NAD(+). The catalysed reaction is N,N-dimethyl-1,4-phenylenediamine + anthranilate + 2 NAD(+) = 2-(4-dimethylaminophenyl)diazenylbenzoate + 2 NADH + 2 H(+). Functionally, quinone reductase that provides resistance to thiol-specific stress caused by electrophilic quinones. Also exhibits azoreductase activity. Catalyzes the reductive cleavage of the azo bond in aromatic azo compounds to the corresponding amines. This is FMN-dependent NADH:quinone oxidoreductase from Bordetella bronchiseptica (strain ATCC BAA-588 / NCTC 13252 / RB50) (Alcaligenes bronchisepticus).